Reading from the N-terminus, the 473-residue chain is MVVKKSRGSSQQLPGLGGQGGCTGFVGMLGTALLFISLPWGAQVMASANISTALGHTSGHYLSIGDGSVTEFDFPEKSEGIIVISSQYTGQTNGTGPSPILKVISLDTEVLTIKNVSAITWSSGGGFVVGIHSGLAGLAPLHLQLMDFYEAPPLLIEERRDFCIRVSPAEDLPSALNTNLGHFSENPILYLLLPLIFVNKCSFGCKVELEVLKELLQSPQPMLLGLLGQFLVMPFYAFLMAKVFMLPKALALGLIITCSSPGGGGSYLFSLLLGGDVTLAISMTFISTVAATGFLPLSSAIYSYLLSIHETLHVPISKILGTLLFIAIPIAAGVVIKSKLPKFSELLLQVIKPFSFILLLGGLFLAYHMGVFILVGVRLPIVLVGFTVPLVGLLVGYSLAICLKLPVAQRRTVSIEVGVQNSLLALAMLQLSLRRLQADYASQAPFIVALSGTSEMLALVIGQFIYSILFPVP.

The next 9 helical transmembrane spans lie at 25–45, 221–241, 249–269, 277–297, 316–336, 356–376, 381–401, 413–433, and 446–466; these read FVGMLGTALLFISLPWGAQVM, PMLLGLLGQFLVMPFYAFLMA, ALALGLIITCSSPGGGGSYLF, VTLAISMTFISTVAATGFLPL, ISKILGTLLFIAIPIAAGVVI, FILLLGGLFLAYHMGVFILVG, IVLVGFTVPLVGLLVGYSLAI, VSIEVGVQNSLLALAMLQLSL, and FIVALSGTSEMLALVIGQFIY.

It belongs to the bile acid:sodium symporter (BASS) (TC 2.A.28) family.

It is found in the membrane. Functionally, the ubiquitous expression and the conservation of the sequence in distant animal species suggest that the gene codes for a protein with housekeeping functions. The polypeptide is P3 protein (Slc10a3) (Mus musculus (Mouse)).